The chain runs to 776 residues: E3 ubiquitin-protein ligase UHRF1 (776 aa).

The Ubiquitin-like domain occupies 1 to 78 (MWIQVRTMDG…VQLLVRQAVA (78 aa)). The segment at 88–126 (AELSDSDSGCGSAQSESDKGSTHGESDVQSAGASGQTDT) is disordered. Residues 93-102 (SDSGCGSAQS) are compositionally biased toward polar residues. Positions 103 to 113 (ESDKGSTHGES) are enriched in basic and acidic residues. Residues 114 to 126 (DVQSAGASGQTDT) show a composition bias toward polar residues. 2 tudor-like regions span residues 135 to 201 (GFYK…PRAR) and 208 to 277 (QLEP…IEEP). The tract at residues 278–298 (GSAEGPGASSDSPLKKGSNGP) is disordered. Positions 290–299 (PLKKGSNGPE) are linker. The PHD-type zinc finger occupies 297 to 364 (GPECKVCKDD…DWYCPDCRND (68 aa)). Histone H3R2me0 binding regions lie at residues 331–335 (CDECD) and 351–353 (PDD). The 164-residue stretch at 417–580 (GPVPGVPVGT…FLVWRYLLKR (164 aa)) folds into the YDG domain. A required to promote base flipping region spans residues 443–444 (HV). DNA is bound by residues 461–462 (AG) and aspartate 467. 2 required for formation of a 5-methylcytosine-binding pocket regions span residues 464-467 (YEDD) and 476-479 (YTGS). Positions 617-660 (EKEKENKNEDDIEETPTKGKRKRKSQSMEEKSSPTKGTPKKMKV) are disordered. The residue at position 649 (serine 649) is a Phosphoserine; by CDK2. The RING-type zinc finger occupies 706–745 (CICCQEVVYQPITTECQHNVCRECLQRSFKAKVYTCPACR).

Post-translationally, phosphorylation at Ser-649 is required for gastrulation. Expressed in proliferating tissues. Highly expressed 24-48 hours after fertilization (hpf) in rapidly proliferating tissues, including the tectum, retina and brachial arches. Preferentially expressed in the liver bud and expression is maintained in the fully developed liver. Also expressed in the proximal gut. In adult, the highest expression is detected in testis.

It is found in the nucleus. It localises to the cytoplasm. It carries out the reaction S-ubiquitinyl-[E2 ubiquitin-conjugating enzyme]-L-cysteine + [acceptor protein]-L-lysine = [E2 ubiquitin-conjugating enzyme]-L-cysteine + N(6)-ubiquitinyl-[acceptor protein]-L-lysine.. Its pathway is protein modification; protein ubiquitination. Its function is as follows. Multidomain protein that acts as a key epigenetic regulator by bridging DNA methylation and chromatin modification. Specifically recognizes and binds hemimethylated DNA at replication forks via its YDG domain and recruits dnmt1 methyltransferase to ensure faithful propagation of the DNA methylation patterns through DNA replication. In addition to its role in maintenance of DNA methylation, also plays a key role in chromatin modification: through its tudor-like regions and PHD-type zinc fingers, specifically recognizes and binds histone H3 trimethylated at 'Lys-9' (H3K9me3) and unmethylated at 'Arg-2' (H3R2me0), respectively, and recruits chromatin proteins. Enriched in pericentric heterochromatin where it recruits different chromatin modifiers required for this chromatin replication. Also localizes to euchromatic regions where it negatively regulates transcription possibly by impacting DNA methylation and histone modifications. Has E3 ubiquitin-protein ligase activity by mediating the ubiquitination of target proteins. However, it is still unclear how E3 ubiquitin-protein ligase activity is related to its role in chromatin in vivo. Required for pregastrula and lens development. The polypeptide is E3 ubiquitin-protein ligase UHRF1 (uhrf1) (Danio rerio (Zebrafish)).